We begin with the raw amino-acid sequence, 76 residues long: Acyl carrier protein (76 aa).

The Carrier domain maps to 1–76 (MSLEEKVKNI…DVIEYIKAHT (76 aa)). Residue serine 36 is modified to O-(pantetheine 4'-phosphoryl)serine.

This sequence belongs to the acyl carrier protein (ACP) family. Post-translationally, 4'-phosphopantetheine is transferred from CoA to a specific serine of apo-ACP by AcpS. This modification is essential for activity because fatty acids are bound in thioester linkage to the sulfhydryl of the prosthetic group.

The protein resides in the cytoplasm. It functions in the pathway lipid metabolism; fatty acid biosynthesis. In terms of biological role, carrier of the growing fatty acid chain in fatty acid biosynthesis. The protein is Acyl carrier protein of Desulfatibacillum aliphaticivorans.